The sequence spans 657 residues: Translation factor GUF1, mitochondrial (657 aa).

Residues 1–39 (MRGCLQSVKWLTSALRPSQSLASSTRYPRRLLSTSAPRN) constitute a mitochondrion transit peptide. Residues 59–239 (ERFRNFCIVA…TVIEQIPAPV (181 aa)) enclose the tr-type G domain. Residues 109-116 (TVKAQTCS), 173-177 (LAFAE), and 227-230 (LLPT) contribute to the GTP site.

The protein belongs to the TRAFAC class translation factor GTPase superfamily. Classic translation factor GTPase family. LepA subfamily.

It is found in the mitochondrion inner membrane. The enzyme catalyses GTP + H2O = GDP + phosphate + H(+). Functionally, promotes mitochondrial protein synthesis. May act as a fidelity factor of the translation reaction, by catalyzing a one-codon backward translocation of tRNAs on improperly translocated ribosomes. Binds to mitochondrial ribosomes in a GTP-dependent manner. The polypeptide is Translation factor GUF1, mitochondrial (Ajellomyces capsulatus (strain NAm1 / WU24) (Darling's disease fungus)).